The sequence spans 260 residues: 1-(5-phosphoribosyl)-5-[(5-phosphoribosylamino)methylideneamino] imidazole-4-carboxamide isomerase (260 aa).

Residue aspartate 8 is the Proton acceptor of the active site. The active-site Proton donor is aspartate 130.

This sequence belongs to the HisA/HisF family.

Its subcellular location is the cytoplasm. The enzyme catalyses 1-(5-phospho-beta-D-ribosyl)-5-[(5-phospho-beta-D-ribosylamino)methylideneamino]imidazole-4-carboxamide = 5-[(5-phospho-1-deoxy-D-ribulos-1-ylimino)methylamino]-1-(5-phospho-beta-D-ribosyl)imidazole-4-carboxamide. Its pathway is amino-acid biosynthesis; L-histidine biosynthesis; L-histidine from 5-phospho-alpha-D-ribose 1-diphosphate: step 4/9. The polypeptide is 1-(5-phosphoribosyl)-5-[(5-phosphoribosylamino)methylideneamino] imidazole-4-carboxamide isomerase (Chlorobium phaeobacteroides (strain BS1)).